Here is a 206-residue protein sequence, read N- to C-terminus: Probable GTP-binding protein EngB (206 aa).

One can recognise an EngB-type G domain in the interval 7-195; that stretch reads DCDEVVLLGR…EEALQAIFSD (189 aa). Residues 15-22, 41-45, 60-63, 140-143, and 175-177 contribute to the GTP site; these read GRSNVGKS, GVTRS, DLPG, NKID, and ISA. Mg(2+)-binding residues include Ser-22 and Thr-43.

The protein belongs to the TRAFAC class TrmE-Era-EngA-EngB-Septin-like GTPase superfamily. EngB GTPase family. Requires Mg(2+) as cofactor.

Functionally, necessary for normal cell division and for the maintenance of normal septation. This Haloquadratum walsbyi (strain DSM 16790 / HBSQ001) protein is Probable GTP-binding protein EngB.